Consider the following 284-residue polypeptide: Aliphatic sulfonates import ATP-binding protein SsuB (284 aa).

An ABC transporter domain is found at 21–242; it reads LRIAHAVKRY…HRGAPAFARL (222 aa). 53–60 is a binding site for ATP; sequence GRSGCGKS.

This sequence belongs to the ABC transporter superfamily. Aliphatic sulfonates importer (TC 3.A.1.17.2) family. The complex is composed of two ATP-binding proteins (SsuB), two transmembrane proteins (SsuC) and a solute-binding protein (SsuA).

The protein localises to the cell inner membrane. The catalysed reaction is ATP + H2O + aliphatic sulfonate-[sulfonate-binding protein]Side 1 = ADP + phosphate + aliphatic sulfonateSide 2 + [sulfonate-binding protein]Side 1.. Its function is as follows. Part of the ABC transporter complex SsuABC involved in aliphatic sulfonates import. Responsible for energy coupling to the transport system. The sequence is that of Aliphatic sulfonates import ATP-binding protein SsuB from Ralstonia nicotianae (strain ATCC BAA-1114 / GMI1000) (Ralstonia solanacearum).